Consider the following 491-residue polypeptide: Monocarboxylate transport permease protein (491 aa).

13 helical membrane passes run 7-27 (GTAL…GFVA), 55-75 (WFLV…PALV), 83-103 (FFAL…MPVL), 130-150 (LAVA…QLVG), 157-177 (ALGL…ALYT), 187-207 (LIAF…VALI), 246-266 (LALG…GIFA), 277-297 (AIML…GYMG), 322-342 (WFSG…AAVM), 374-396 (ITSL…QFAL), 400-422 (LLGG…TNWF), 427-447 (LLAG…DAGW), and 465-485 (GLLA…LLPA).

It belongs to the sodium:solute symporter (SSF) (TC 2.A.21) family.

It is found in the cell membrane. With respect to regulation, inhibited by CCCP, but is apparently not affected by the concentration of sodium. Its function is as follows. Low-affinity transporter of alanine and high-affinity transporter of lactate and pyruvate. Can also transport other monocarboxylates such as propionate, butyrate, alpha-hydroxybutyrate or acetate. May be proton coupled. Required for optimal growth on alanine or pyruvate and ammonia. This chain is Monocarboxylate transport permease protein, found in Rhizobium johnstonii (strain DSM 114642 / LMG 32736 / 3841) (Rhizobium leguminosarum bv. viciae).